The sequence spans 930 residues: Isoleucine--tRNA ligase (930 aa).

The 'HIGH' region signature appears at 57 to 67 (PYANGNIHVGH). Glu-554 is a binding site for L-isoleucyl-5'-AMP. A 'KMSKS' region motif is present at residues 595-599 (KMSKS). Residue Lys-598 participates in ATP binding. The Zn(2+) site is built by Cys-888, Cys-891, Cys-908, and Cys-911.

Belongs to the class-I aminoacyl-tRNA synthetase family. IleS type 1 subfamily. As to quaternary structure, monomer. Zn(2+) is required as a cofactor.

The protein localises to the cytoplasm. It catalyses the reaction tRNA(Ile) + L-isoleucine + ATP = L-isoleucyl-tRNA(Ile) + AMP + diphosphate. Its function is as follows. Catalyzes the attachment of isoleucine to tRNA(Ile). As IleRS can inadvertently accommodate and process structurally similar amino acids such as valine, to avoid such errors it has two additional distinct tRNA(Ile)-dependent editing activities. One activity is designated as 'pretransfer' editing and involves the hydrolysis of activated Val-AMP. The other activity is designated 'posttransfer' editing and involves deacylation of mischarged Val-tRNA(Ile). The chain is Isoleucine--tRNA ligase from Streptococcus pneumoniae (strain CGSP14).